The primary structure comprises 841 residues: Protein translocase subunit SecA (841 aa).

ATP-binding positions include Q87, 105 to 109 (GEGKT), and D494. Positions 825, 827, 836, and 837 each coordinate Zn(2+).

It belongs to the SecA family. Monomer and homodimer. Part of the essential Sec protein translocation apparatus which comprises SecA, SecYEG and auxiliary proteins SecDF-YajC and YidC. Zn(2+) serves as cofactor.

Its subcellular location is the cell inner membrane. The protein resides in the cytoplasm. The enzyme catalyses ATP + H2O + cellular proteinSide 1 = ADP + phosphate + cellular proteinSide 2.. In terms of biological role, part of the Sec protein translocase complex. Interacts with the SecYEG preprotein conducting channel. Has a central role in coupling the hydrolysis of ATP to the transfer of proteins into and across the cell membrane, serving as an ATP-driven molecular motor driving the stepwise translocation of polypeptide chains across the membrane. The sequence is that of Protein translocase subunit SecA from Syntrophus aciditrophicus (strain SB).